The primary structure comprises 199 residues: Recombination protein RecR (199 aa).

A C4-type zinc finger spans residues 57 to 72; that stretch reads CQSCRTFTEETYCPIC. In terms of domain architecture, Toprim spans 81–176; that stretch reads DIICVVETPA…MVSRIAHGVP (96 aa).

The protein belongs to the RecR family.

Its function is as follows. May play a role in DNA repair. It seems to be involved in an RecBC-independent recombinational process of DNA repair. It may act with RecF and RecO. The polypeptide is Recombination protein RecR (Shewanella halifaxensis (strain HAW-EB4)).